A 235-amino-acid chain; its full sequence is tRNA (guanine-N(1)-)-methyltransferase (235 aa).

S-adenosyl-L-methionine contacts are provided by residues glycine 114 and 134–139 (IGDYIL).

The protein belongs to the RNA methyltransferase TrmD family. As to quaternary structure, homodimer.

Its subcellular location is the cytoplasm. The catalysed reaction is guanosine(37) in tRNA + S-adenosyl-L-methionine = N(1)-methylguanosine(37) in tRNA + S-adenosyl-L-homocysteine + H(+). Its function is as follows. Specifically methylates guanosine-37 in various tRNAs. This is tRNA (guanine-N(1)-)-methyltransferase from Ehrlichia canis (strain Jake).